Here is a 776-residue protein sequence, read N- to C-terminus: Protein SEY1 (776 aa).

The Cytoplasmic portion of the chain corresponds to 1–681 (MADRSAIQLI…KRSIITTRTH (681 aa)). The region spanning 34-263 (GLDYHVISVF…TENYYFKPQY (230 aa)) is the GB1/RHD3-type G domain. GTP is bound at residue 44–51 (GSQSSGKS). A helical membrane pass occupies residues 682-702 (IPPWIYVLLAVLGWNEFVAVI). At 703–705 (RNP) the chain is on the lumenal side. The chain crosses the membrane as a helical span at residues 706-726 (LFVTLTLILGATFFVIHKFGL). The Cytoplasmic portion of the chain corresponds to 727-776 (WGPVVNVVQSAVGETRTAIKDKLRQFVVEDHEVKESFEMKDFSKNEQKEK).

The protein belongs to the TRAFAC class dynamin-like GTPase superfamily. GB1/RHD3 GTPase family. RHD3 subfamily. In terms of assembly, interacts with RTN1 and YOP1; GTP binding is not required for these interactions.

Its subcellular location is the endoplasmic reticulum membrane. In terms of biological role, cooperates with the reticulon proteins RTN1 and RTN2 and the tubule-shaping DP1 family protein YOP1 to generate and maintain the structure of the tubular endoplasmic reticulum network. Has GTPase activity, which is required for its function in ER organization. The polypeptide is Protein SEY1 (Saccharomyces cerevisiae (strain YJM789) (Baker's yeast)).